Consider the following 207-residue polypeptide: Uridine kinase (207 aa).

ATP is bound at residue 11 to 18; sequence GGSGSGKT.

It belongs to the uridine kinase family.

Its subcellular location is the cytoplasm. It catalyses the reaction uridine + ATP = UMP + ADP + H(+). The enzyme catalyses cytidine + ATP = CMP + ADP + H(+). It functions in the pathway pyrimidine metabolism; CTP biosynthesis via salvage pathway; CTP from cytidine: step 1/3. Its pathway is pyrimidine metabolism; UMP biosynthesis via salvage pathway; UMP from uridine: step 1/1. This is Uridine kinase from Staphylococcus aureus (strain Mu3 / ATCC 700698).